We begin with the raw amino-acid sequence, 398 residues long: MNKEIIHKKSNGIIEWIDYRLPIFSFLKHFSYYQTPKNLNYLWNLGSIAGIALVIQIITGVILAMHYTPHVDHAFESVERIMRNVNYGWLLRYTHAVGASMFFAAIYLHIARGLYYGSYKTPRELLWHIGIIIFLIMMATAFMGYVLPWGQMSYWGATVITNLFSAIPLVGEPIVIWLWGGFSVDNPTLNRFFALHYLFPFIIVVLVILHLVALHQHGSNNPKGIDVKSTKDTIPFHPYYTVKDFVGFGVYFIIFAYFIFYAPNYLGHPDNYIPANPLVTPAHIVPEWYFLPFYAILRAVPSKLGGVFLMFGSIVVLFLLPWLDTSKIRSGNYRPIYRIAFWIFMADCLFLGYLGSKPVSEPYITISRFAVCYYFCHFLLVLPLIGKYEKPLPLPKVL.

The helical transmembrane segment at 45-65 threads the bilayer; sequence LGSIAGIALVIQIITGVILAM. Heme b-binding residues include histidine 95 and histidine 109. The next 9 helical transmembrane spans lie at 96–116, 129–149, 164–184, 192–212, 245–265, 277–297, 304–324, 339–359, and 366–386; these read AVGASMFFAAIYLHIARGLYY, IGIIIFLIMMATAFMGYVLPW, FSAIPLVGEPIVIWLWGGFSV, FFALHYLFPFIIVVLVILHLV, FVGFGVYFIIFAYFIFYAPNY, PLVTPAHIVPEWYFLPFYAIL, LGGVFLMFGSIVVLFLLPWLD, IAFWIFMADCLFLGYLGSKPV, and ISRFAVCYYFCHFLLVLPLIG. Residues histidine 196 and histidine 210 each coordinate heme b.

It belongs to the cytochrome b family. In terms of assembly, the main subunits of complex b-c1 are: cytochrome b, cytochrome c1 and the Rieske protein. Requires heme b as cofactor.

It is found in the cell membrane. Functionally, component of the ubiquinol-cytochrome c reductase complex (complex III or cytochrome b-c1 complex), which is a respiratory chain that generates an electrochemical potential coupled to ATP synthesis. The sequence is that of Cytochrome b (petB) from Rickettsia prowazekii (strain Madrid E).